The following is a 244-amino-acid chain: Leucyl/phenylalanyl-tRNA--protein transferase (244 aa).

This sequence belongs to the L/F-transferase family.

It localises to the cytoplasm. The enzyme catalyses N-terminal L-lysyl-[protein] + L-leucyl-tRNA(Leu) = N-terminal L-leucyl-L-lysyl-[protein] + tRNA(Leu) + H(+). The catalysed reaction is N-terminal L-arginyl-[protein] + L-leucyl-tRNA(Leu) = N-terminal L-leucyl-L-arginyl-[protein] + tRNA(Leu) + H(+). It carries out the reaction L-phenylalanyl-tRNA(Phe) + an N-terminal L-alpha-aminoacyl-[protein] = an N-terminal L-phenylalanyl-L-alpha-aminoacyl-[protein] + tRNA(Phe). Functions in the N-end rule pathway of protein degradation where it conjugates Leu, Phe and, less efficiently, Met from aminoacyl-tRNAs to the N-termini of proteins containing an N-terminal arginine or lysine. This chain is Leucyl/phenylalanyl-tRNA--protein transferase, found in Thermodesulfovibrio yellowstonii (strain ATCC 51303 / DSM 11347 / YP87).